A 690-amino-acid polypeptide reads, in one-letter code: Glycine--tRNA ligase beta subunit (690 aa).

The protein belongs to the class-II aminoacyl-tRNA synthetase family. As to quaternary structure, tetramer of two alpha and two beta subunits.

The protein localises to the cytoplasm. The catalysed reaction is tRNA(Gly) + glycine + ATP = glycyl-tRNA(Gly) + AMP + diphosphate. This is Glycine--tRNA ligase beta subunit from Desulfitobacterium hafniense (strain Y51).